Reading from the N-terminus, the 400-residue chain is Enoyl-[acyl-carrier-protein] reductase [NADH] (400 aa).

Residues 48-53, 74-75, 111-112, and 139-140 contribute to the NAD(+) site; these read GSSSGY, FE, DA, and LA. Tyr-225 contributes to the substrate binding site. Catalysis depends on Tyr-235, which acts as the Proton donor. Residues Lys-244 and 273-275 contribute to the NAD(+) site; that span reads VVT.

It belongs to the TER reductase family. Monomer.

The enzyme catalyses a 2,3-saturated acyl-[ACP] + NAD(+) = a (2E)-enoyl-[ACP] + NADH + H(+). It functions in the pathway lipid metabolism; fatty acid biosynthesis. Involved in the final reduction of the elongation cycle of fatty acid synthesis (FAS II). Catalyzes the reduction of a carbon-carbon double bond in an enoyl moiety that is covalently linked to an acyl carrier protein (ACP). The polypeptide is Enoyl-[acyl-carrier-protein] reductase [NADH] (Shewanella piezotolerans (strain WP3 / JCM 13877)).